We begin with the raw amino-acid sequence, 443 residues long: Thymidine phosphorylase (443 aa).

The protein belongs to the thymidine/pyrimidine-nucleoside phosphorylase family. Homodimer.

The catalysed reaction is thymidine + phosphate = 2-deoxy-alpha-D-ribose 1-phosphate + thymine. The protein operates within pyrimidine metabolism; dTMP biosynthesis via salvage pathway; dTMP from thymine: step 1/2. Its function is as follows. The enzymes which catalyze the reversible phosphorolysis of pyrimidine nucleosides are involved in the degradation of these compounds and in their utilization as carbon and energy sources, or in the rescue of pyrimidine bases for nucleotide synthesis. This Shewanella baltica (strain OS195) protein is Thymidine phosphorylase.